Consider the following 117-residue polypeptide: Immunoglobulin heavy variable 1-69D (117 aa).

Residues 1–19 (MDWTWRFLFVVAAATGVQS) form the signal peptide. At glutamine 20 the chain carries Pyrrolidone carboxylic acid. Residues 20–44 (QVQLVQSGAEVKKPGSSVKVSCKAS) form a framework-1 region. Residues 20 to 117 (QVQLVQSGAE…EDTAVYYCAR (98 aa)) enclose the Ig-like domain. Cysteine 41 and cysteine 115 are oxidised to a cystine. A complementarity-determining-1 region spans residues 45–52 (GGTFSSYA). Residues 53-69 (ISWVRQAPGQGLEWMGG) are framework-2. The tract at residues 70–77 (IIPIFGTA) is complementarity-determining-2. The tract at residues 78–115 (NYAQKFQGRVTITADESTSTAYMELSSLRSEDTAVYYC) is framework-3. Positions 116-117 (AR) are complementarity-determining-3.

In terms of assembly, immunoglobulins are composed of two identical heavy chains and two identical light chains; disulfide-linked.

Its subcellular location is the secreted. It localises to the cell membrane. Its function is as follows. V region of the variable domain of immunoglobulin heavy chains that participates in the antigen recognition. Immunoglobulins, also known as antibodies, are membrane-bound or secreted glycoproteins produced by B lymphocytes. In the recognition phase of humoral immunity, the membrane-bound immunoglobulins serve as receptors which, upon binding of a specific antigen, trigger the clonal expansion and differentiation of B lymphocytes into immunoglobulins-secreting plasma cells. Secreted immunoglobulins mediate the effector phase of humoral immunity, which results in the elimination of bound antigens. The antigen binding site is formed by the variable domain of one heavy chain, together with that of its associated light chain. Thus, each immunoglobulin has two antigen binding sites with remarkable affinity for a particular antigen. The variable domains are assembled by a process called V-(D)-J rearrangement and can then be subjected to somatic hypermutations which, after exposure to antigen and selection, allow affinity maturation for a particular antigen. This is Immunoglobulin heavy variable 1-69D from Homo sapiens (Human).